Here is a 274-residue protein sequence, read N- to C-terminus: Phosphate import ATP-binding protein PstB (274 aa).

Positions 28–269 constitute an ABC transporter domain; it reads VTVRDLNFYY…PNDRRTQDYI (242 aa). Position 60-67 (60-67) interacts with ATP; the sequence is GPSGCGKS.

This sequence belongs to the ABC transporter superfamily. Phosphate importer (TC 3.A.1.7) family. In terms of assembly, the complex is composed of two ATP-binding proteins (PstB), two transmembrane proteins (PstC and PstA) and a solute-binding protein (PstS).

Its subcellular location is the cell inner membrane. The enzyme catalyses phosphate(out) + ATP + H2O = ADP + 2 phosphate(in) + H(+). Its function is as follows. Part of the ABC transporter complex PstSACB involved in phosphate import. Responsible for energy coupling to the transport system. The chain is Phosphate import ATP-binding protein PstB from Rhodopseudomonas palustris (strain HaA2).